The following is a 252-amino-acid chain: Ureidoacrylate amidohydrolase RutB (252 aa).

Polar residues predominate over residues 1 to 14 (MSTPARNTTLTSNT). The segment at 1 to 31 (MSTPARNTTLTSNTPAGAPRLPGAPAPQVLP) is disordered. Low complexity predominate over residues 15–27 (PAGAPRLPGAPAP). Aspartate 50 functions as the Proton acceptor in the catalytic mechanism. Residue lysine 159 is part of the active site. Cysteine 192 serves as the catalytic Nucleophile.

Belongs to the isochorismatase family. RutB subfamily.

The catalysed reaction is (Z)-3-ureidoacrylate + H2O + H(+) = (Z)-3-aminoacrylate + NH4(+) + CO2. It carries out the reaction (Z)-3-ureidoacrylate + H2O = (Z)-3-aminoacrylate + carbamate + H(+). The enzyme catalyses (Z)-2-methylureidoacrylate + H2O + H(+) = (Z)-2-methylaminoacrylate + NH4(+) + CO2. Hydrolyzes ureidoacrylate to form aminoacrylate and carbamate. The carbamate hydrolyzes spontaneously, thereby releasing one of the nitrogen atoms of the pyrimidine ring as ammonia and one of its carbon atoms as CO2. The sequence is that of Ureidoacrylate amidohydrolase RutB from Variovorax paradoxus (strain S110).